Reading from the N-terminus, the 160-residue chain is 2-C-methyl-D-erythritol 2,4-cyclodiphosphate synthase (160 aa).

Positions 10 and 12 each coordinate a divalent metal cation. 4-CDP-2-C-methyl-D-erythritol 2-phosphate is bound by residues Asp-10 to His-12 and His-36 to Ser-37. An a divalent metal cation-binding site is contributed by His-44. Residues Asp-58–Gly-60, Thr-134–Glu-137, Phe-141, and Arg-144 contribute to the 4-CDP-2-C-methyl-D-erythritol 2-phosphate site.

Belongs to the IspF family. In terms of assembly, homotrimer. It depends on a divalent metal cation as a cofactor.

It catalyses the reaction 4-CDP-2-C-methyl-D-erythritol 2-phosphate = 2-C-methyl-D-erythritol 2,4-cyclic diphosphate + CMP. It functions in the pathway isoprenoid biosynthesis; isopentenyl diphosphate biosynthesis via DXP pathway; isopentenyl diphosphate from 1-deoxy-D-xylulose 5-phosphate: step 4/6. Its function is as follows. Involved in the biosynthesis of isopentenyl diphosphate (IPP) and dimethylallyl diphosphate (DMAPP), two major building blocks of isoprenoid compounds. Catalyzes the conversion of 4-diphosphocytidyl-2-C-methyl-D-erythritol 2-phosphate (CDP-ME2P) to 2-C-methyl-D-erythritol 2,4-cyclodiphosphate (ME-CPP) with a corresponding release of cytidine 5-monophosphate (CMP). This Phocaeicola vulgatus (strain ATCC 8482 / DSM 1447 / JCM 5826 / CCUG 4940 / NBRC 14291 / NCTC 11154) (Bacteroides vulgatus) protein is 2-C-methyl-D-erythritol 2,4-cyclodiphosphate synthase.